The following is a 287-amino-acid chain: Nucleoside kinase (287 aa).

Substrate contacts are provided by D13, N28, G38, and N42. Residue Q102 coordinates ATP. Residues S104 and Q150 each coordinate substrate. ATP-binding positions include N173 and 196 to 201; that span reads TNGERG. D227 lines the substrate pocket. Catalysis depends on D227, which acts as the Proton acceptor.

This sequence belongs to the carbohydrate kinase PfkB family. Homodimer. It depends on Mg(2+) as a cofactor. Co(2+) serves as cofactor.

It catalyses the reaction adenosine + ATP = AMP + ADP + H(+). It carries out the reaction cytidine + ATP = CMP + ADP + H(+). The enzyme catalyses guanosine + ATP = GMP + ADP + H(+). The catalysed reaction is inosine + ATP = IMP + ADP + H(+). Functionally, nucleoside kinase with broad substrate specificity. Catalyzes the phosphorylation of a variety of nucleosides to the corresponding nucleoside 5'-mono-phosphate in the presence of phosphate donors and divalent cations. Displays the most efficient activity with guanosine, followed by inosine, cytidine, and adenosine. Negligible enzymatic activity is detected with thymidine, uridine, and 2-deoxyadenosine. ATP is the most efficient phosphate donor, but can also use GTP and ITP. Shows no sugar kinase activity, since it is unable to phosphorylate ribose, fructose-1-phosphate, or fructose-6-phosphate. This Thermoplasma acidophilum (strain ATCC 25905 / DSM 1728 / JCM 9062 / NBRC 15155 / AMRC-C165) protein is Nucleoside kinase.